The sequence spans 264 residues: MFVPSGDSVPDLAGCTLLMPAVSVGNVGQLAIDLIISTLNMHKIGYFYTDCLVPMVGNNPYATAEENSAELSINAEVYALPSKKLVALQLRSIFIKYKSKSFCEKLLSWVKCSGCAKVVVLSSSHSYHRNDLQLRSTPFRYLLTPSMQKSVQNKIQSLNWEEMEKTPCIPEIDDSEFCVRVPGGGITKLLYDEGCSKEIPIAILLKFVSEGDNIPDALGLVEYLNEWLQIIKPHCEDPTASSLPWKMPSSWRLLFGSGLPPALF.

At Thr137 the chain carries Phosphothreonine.

This sequence belongs to the PSMG2 family. Forms a heterodimer with PSMG1. The PSMG1-PSMG2 heterodimer interacts directly with the PSMA5 and PSMA7 proteasome alpha subunits. Degraded by the proteasome upon completion of 20S proteasome maturation.

The protein resides in the nucleus. Its function is as follows. Chaperone protein which promotes assembly of the 20S proteasome as part of a heterodimer with PSMG1. The PSMG1-PSMG2 heterodimer binds to the PSMA5 and PSMA7 proteasome subunits, promotes assembly of the proteasome alpha subunits into the heteroheptameric alpha ring and prevents alpha ring dimerization. The protein is Proteasome assembly chaperone 2 of Bos taurus (Bovine).